The following is a 251-amino-acid chain: tRNA (guanine-N(7)-)-methyltransferase (251 aa).

The disordered stretch occupies residues 1-29; sequence MTQTLSSQDPQAPAAPPMPGAAGSAPADV. 4 residues coordinate S-adenosyl-L-methionine: Glu84, Glu109, Asp136, and Asp159. Residue Asp159 is part of the active site. Lys163 is a substrate binding site. The interaction with RNA stretch occupies residues 165-170; the sequence is RHNKRR. Residues Asp195 and 230–233 each bind substrate; that span reads TKFE.

Belongs to the class I-like SAM-binding methyltransferase superfamily. TrmB family.

The catalysed reaction is guanosine(46) in tRNA + S-adenosyl-L-methionine = N(7)-methylguanosine(46) in tRNA + S-adenosyl-L-homocysteine. It participates in tRNA modification; N(7)-methylguanine-tRNA biosynthesis. Functionally, catalyzes the formation of N(7)-methylguanine at position 46 (m7G46) in tRNA. The chain is tRNA (guanine-N(7)-)-methyltransferase from Acidovorax sp. (strain JS42).